The primary structure comprises 294 residues: MLSIIVPSYNRKAEVPALLESLTQQTSSNFEVIIVDDCSKERVVVEQSYSFPVTVIRNETNQGAAESRNVGARTSKGDWLLFLDDDDCFMPEKCEKVLQVIEQNPNINFIYHPAKCEMVNEGFTYVTQPIEPQEISTERILLANKIGGMPMIAIKKEMFLKIGGLSTALRSLEDYDFLLKLLQEPSFTPYKINEPLTYCTFHTKRSSVSTDTTNTQKAIDYIREHYVKTVEQARNFDINASYILAYPHIMNLSRKAAKYYFDIFKKTKSIKQFIITLVILISPKLAINLKRLGK.

Belongs to the glycosyltransferase 2 family.

This is an uncharacterized protein from Haemophilus influenzae (strain ATCC 51907 / DSM 11121 / KW20 / Rd).